Here is a 705-residue protein sequence, read N- to C-terminus: Polyribonucleotide nucleotidyltransferase (705 aa).

Mg(2+) contacts are provided by Asp-485 and Asp-491. Residues 552 to 611 (PKVFTMSINPSKIKDVIGAGGKTINKIIDETGVKIDIKEDGSVFVTAEDYESGKKALAMI) enclose the KH domain. In terms of domain architecture, S1 motif spans 621 to 689 (GEVYLGKVTK…SMGRVNLSRK (69 aa)).

The protein belongs to the polyribonucleotide nucleotidyltransferase family. Requires Mg(2+) as cofactor.

It localises to the cytoplasm. The enzyme catalyses RNA(n+1) + phosphate = RNA(n) + a ribonucleoside 5'-diphosphate. In terms of biological role, involved in mRNA degradation. Catalyzes the phosphorolysis of single-stranded polyribonucleotides processively in the 3'- to 5'-direction. The sequence is that of Polyribonucleotide nucleotidyltransferase from Clostridium novyi (strain NT).